Consider the following 252-residue polypeptide: MANLGYWMLVLFVATWSDLGLCKKRPKPGGWNTGGSRYPGQGSPGGNRYPPQGGGWGQPHGGGWGQPHGGGWGQPHGGGWGQPHGGGWGQAGGTHNQWNKPSKPKTNMKHMAGAAAAGAVVGGLGGYMLGSAMSRPLIHFGNDYEDRYYRENMYRYPNQVYYRPVDQYNNQNNFVHDCVNITIKQHTVTTTTKGENLTETDVKMMERVVEQMCITQYERESQAYYQRGSSMVLFSSPPVILLISFLIFLIVG.

An N-terminal signal peptide occupies residues 1–22 (MANLGYWMLVLFVATWSDLGLC). Positions 23-229 (KKRPKPGGWN…ESQAYYQRGS (207 aa)) are interaction with GRB2, ERI3 and SYN1. Residues 26 to 104 (PKPGGWNTGG…HNQWNKPSKP (79 aa)) form a disordered region. A run of 5 repeats spans residues 51 to 58 (PQGGGWGQ), 59 to 66 (PHGGGWGQ), 67 to 74 (PHGGGWGQ), 75 to 82 (PHGGGWGQ), and 83 to 90 (PHGGGWGQ). The interval 51–90 (PQGGGWGQPHGGGWGQPHGGGWGQPHGGGWGQPHGGGWGQ) is 5 X 8 AA tandem repeats of P-H-G-G-G-W-G-Q. Gly residues predominate over residues 52 to 92 (QGGGWGQPHGGGWGQPHGGGWGQPHGGGWGQPHGGGWGQAG). Residues H60, G61, G62, H68, G69, G70, H76, G77, G78, H84, G85, and G86 each contribute to the Cu(2+) site. A disulfide bridge connects residues C178 and C213. N-linked (GlcNAc...) asparagine glycosylation is found at N180 and N196. S229 is lipidated: GPI-anchor amidated serine. Positions 230–252 (SMVLFSSPPVILLISFLIFLIVG) are cleaved as a propeptide — removed in mature form.

Belongs to the prion family. As to quaternary structure, monomer and homodimer. Has a tendency to aggregate into amyloid fibrils containing a cross-beta spine, formed by a steric zipper of superposed beta-strands. Soluble oligomers may represent an intermediate stage on the path to fibril formation. Copper binding may promote oligomerization. Interacts with GRB2, APP, ERI3/PRNPIP and SYN1. Mislocalized cytosolically exposed PrP interacts with MGRN1; this interaction alters MGRN1 subcellular location and causes lysosomal enlargement. Interacts with KIAA1191.

Its subcellular location is the cell membrane. The protein resides in the golgi apparatus. Its primary physiological function is unclear. Has cytoprotective activity against internal or environmental stresses. May play a role in neuronal development and synaptic plasticity. May be required for neuronal myelin sheath maintenance. May play a role in iron uptake and iron homeostasis. Soluble oligomers are toxic to cultured neuroblastoma cells and induce apoptosis (in vitro). Association with GPC1 (via its heparan sulfate chains) targets PRNP to lipid rafts. Also provides Cu(2+) or Zn(2+) for the ascorbate-mediated GPC1 deaminase degradation of its heparan sulfate side chains. This Ateles paniscus (Black spider monkey) protein is Major prion protein (PRNP).